Here is a 224-residue protein sequence, read N- to C-terminus: Flagellar L-ring protein (224 aa).

The N-terminal stretch at M1–G15 is a signal peptide. Residue C16 is the site of N-palmitoyl cysteine attachment. C16 is lipidated: S-diacylglycerol cysteine.

It belongs to the FlgH family. The basal body constitutes a major portion of the flagellar organelle and consists of four rings (L,P,S, and M) mounted on a central rod.

It localises to the cell outer membrane. It is found in the bacterial flagellum basal body. Functionally, assembles around the rod to form the L-ring and probably protects the motor/basal body from shearing forces during rotation. This is Flagellar L-ring protein from Idiomarina loihiensis (strain ATCC BAA-735 / DSM 15497 / L2-TR).